The following is a 593-amino-acid chain: Aspartate--tRNA ligase (593 aa).

Position 180 (E180) interacts with L-aspartate. Residues 204 to 207 (QLFK) form an aspartate region. R226 is an L-aspartate binding site. Residues 226 to 228 (RDE) and Q235 each bind ATP. H454 contacts L-aspartate. E488 contacts ATP. R495 contributes to the L-aspartate binding site. Residue 540 to 543 (GFDR) participates in ATP binding.

Belongs to the class-II aminoacyl-tRNA synthetase family. Type 1 subfamily. In terms of assembly, homodimer.

It localises to the cytoplasm. The catalysed reaction is tRNA(Asp) + L-aspartate + ATP = L-aspartyl-tRNA(Asp) + AMP + diphosphate. In terms of biological role, catalyzes the attachment of L-aspartate to tRNA(Asp) in a two-step reaction: L-aspartate is first activated by ATP to form Asp-AMP and then transferred to the acceptor end of tRNA(Asp). The protein is Aspartate--tRNA ligase of Clostridium novyi (strain NT).